The primary structure comprises 72 residues: Translation initiation factor IF-1 (72 aa).

The S1-like domain maps to 2-72; sequence AKEDVIEIQG…TKGRITYRFK (71 aa).

Belongs to the IF-1 family. As to quaternary structure, component of the 30S ribosomal translation pre-initiation complex which assembles on the 30S ribosome in the order IF-2 and IF-3, IF-1 and N-formylmethionyl-tRNA(fMet); mRNA recruitment can occur at any time during PIC assembly.

It localises to the cytoplasm. One of the essential components for the initiation of protein synthesis. Stabilizes the binding of IF-2 and IF-3 on the 30S subunit to which N-formylmethionyl-tRNA(fMet) subsequently binds. Helps modulate mRNA selection, yielding the 30S pre-initiation complex (PIC). Upon addition of the 50S ribosomal subunit IF-1, IF-2 and IF-3 are released leaving the mature 70S translation initiation complex. The sequence is that of Translation initiation factor IF-1 from Lactiplantibacillus plantarum (strain ATCC BAA-793 / NCIMB 8826 / WCFS1) (Lactobacillus plantarum).